Consider the following 71-residue polypeptide: Long neurotoxin 1 (71 aa).

Disulfide bonds link cysteine 3–cysteine 20, cysteine 14–cysteine 41, cysteine 26–cysteine 30, cysteine 45–cysteine 56, and cysteine 57–cysteine 62.

It belongs to the three-finger toxin family. Long-chain subfamily. Type II alpha-neurotoxin sub-subfamily. As to expression, expressed by the venom gland.

Its subcellular location is the secreted. Binds with high affinity to muscular (alpha-1/CHRNA1) and neuronal (alpha-7/CHRNA7) nicotinic acetylcholine receptor (nAChR) and inhibits acetylcholine from binding to the receptor, thereby impairing neuromuscular and neuronal transmission. This Naja nivea (Cape cobra) protein is Long neurotoxin 1.